An 82-amino-acid chain; its full sequence is uncharacterized protein (82 aa).

This is an uncharacterized protein from Dictyostelium discoideum (Social amoeba).